A 442-amino-acid chain; its full sequence is Transforming growth factor beta-2 proprotein (442 aa).

The N-terminal stretch at 1-20 (MHYCVLRTFLLLHLVPVALS) is a signal peptide. N-linked (GlcNAc...) asparagine glycans are attached at residues Asn-72, Asn-168, and Asn-269. Disulfide bonds link Cys-337/Cys-346, Cys-345/Cys-408, Cys-374/Cys-439, and Cys-378/Cys-441.

It belongs to the TGF-beta family. As to quaternary structure, interacts with the serine proteases, HTRA1 and HTRA3. Interacts with ASPN. Interacts with MFAP5. In terms of assembly, interacts with Transforming growth factor beta-2 (TGF-beta-2) chain; interaction is non-covalent and maintains (TGF-beta-2) in a latent state. Interacts with LRRC32/GARP; leading to regulate activation of TGF-beta-2. Interacts with NREP; the interaction results in a decrease in TGFB2 autoinduction. Transforming growth factor beta-2: Homodimer; disulfide-linked. Transforming growth factor beta-2: Interacts with TGF-beta receptors (TGFBR1 and TGFBR2), leading to signal transduction. Post-translationally, the precursor proprotein is cleaved in the Golgi apparatus to form Transforming growth factor beta-2 (TGF-beta-2) and Latency-associated peptide (LAP) chains, which remain non-covalently linked, rendering TGF-beta-2 inactive. As to expression, expressed in cardiomyocytes. In terms of tissue distribution, expressed in the aorta, primary bronchus, uterus, heart, skeletal muscle, sciatic nerve and spinal cord but not in the intestine.

Its subcellular location is the secreted. It localises to the extracellular space. The protein resides in the extracellular matrix. Functionally, precursor of the Latency-associated peptide (LAP) and Transforming growth factor beta-2 (TGF-beta-2) chains, which constitute the regulatory and active subunit of TGF-beta-2, respectively. In terms of biological role, required to maintain the Transforming growth factor beta-2 (TGF-beta-2) chain in a latent state during storage in extracellular matrix. Associates non-covalently with TGF-beta-2 and regulates its activation via interaction with 'milieu molecules', such as LTBP1 and LRRC32/GARP, that control activation of TGF-beta-2. Multifunctional protein that regulates various processes such as angiogenesis and heart development. Activation into mature form follows different steps: following cleavage of the proprotein in the Golgi apparatus, Latency-associated peptide (LAP) and Transforming growth factor beta-2 (TGF-beta-2) chains remain non-covalently linked rendering TGF-beta-2 inactive during storage in extracellular matrix. At the same time, LAP chain interacts with 'milieu molecules', such as LTBP1 and LRRC32/GARP, that control activation of TGF-beta-2 and maintain it in a latent state during storage in extracellular milieus. Once activated following release of LAP, TGF-beta-2 acts by binding to TGF-beta receptors (TGFBR1 and TGFBR2), which transduce signal. This chain is Transforming growth factor beta-2 proprotein (Tgfb2), found in Rattus norvegicus (Rat).